The sequence spans 310 residues: Hydroxyacylglutathione hydrolase, mitochondrial (310 aa).

6 residues coordinate Zn(2+): histidine 104, histidine 106, aspartate 108, histidine 109, histidine 160, and aspartate 184. Substrate-binding positions include 193–195 (KFF), 223–225 (HEY), and 299–302 (RKEK). Histidine 223 is a Zn(2+) binding site.

Belongs to the metallo-beta-lactamase superfamily. Glyoxalase II family. Monomer. Requires Zn(2+) as cofactor.

It is found in the mitochondrion matrix. It localises to the cytoplasm. It catalyses the reaction an S-(2-hydroxyacyl)glutathione + H2O = a 2-hydroxy carboxylate + glutathione + H(+). It carries out the reaction (R)-S-lactoylglutathione + H2O = (R)-lactate + glutathione + H(+). Functionally, thiolesterase that catalyzes the hydrolysis of S-D-lactoyl-glutathione to form glutathione and D-lactic acid. The polypeptide is Hydroxyacylglutathione hydrolase, mitochondrial (HAGH) (Gallus gallus (Chicken)).